A 212-amino-acid polypeptide reads, in one-letter code: Phosphatidylserine decarboxylase proenzyme (212 aa).

Serine 182 functions as the Schiff-base intermediate with substrate; via pyruvic acid in the catalytic mechanism. Serine 182 carries the post-translational modification Pyruvic acid (Ser); by autocatalysis.

Belongs to the phosphatidylserine decarboxylase family. PSD-A subfamily. As to quaternary structure, heterodimer of a large membrane-associated beta subunit and a small pyruvoyl-containing alpha subunit. The cofactor is pyruvate. Post-translationally, is synthesized initially as an inactive proenzyme. Formation of the active enzyme involves a self-maturation process in which the active site pyruvoyl group is generated from an internal serine residue via an autocatalytic post-translational modification. Two non-identical subunits are generated from the proenzyme in this reaction, and the pyruvate is formed at the N-terminus of the alpha chain, which is derived from the carboxyl end of the proenzyme. The post-translation cleavage follows an unusual pathway, termed non-hydrolytic serinolysis, in which the side chain hydroxyl group of the serine supplies its oxygen atom to form the C-terminus of the beta chain, while the remainder of the serine residue undergoes an oxidative deamination to produce ammonia and the pyruvoyl prosthetic group on the alpha chain.

It localises to the cell membrane. It catalyses the reaction a 1,2-diacyl-sn-glycero-3-phospho-L-serine + H(+) = a 1,2-diacyl-sn-glycero-3-phosphoethanolamine + CO2. It functions in the pathway phospholipid metabolism; phosphatidylethanolamine biosynthesis; phosphatidylethanolamine from CDP-diacylglycerol: step 2/2. Its function is as follows. Catalyzes the formation of phosphatidylethanolamine (PtdEtn) from phosphatidylserine (PtdSer). This chain is Phosphatidylserine decarboxylase proenzyme, found in Chlorobium limicola (strain DSM 245 / NBRC 103803 / 6330).